The sequence spans 424 residues: Piriformospora indica-insensitive protein 2 (424 aa).

The N-terminal stretch at 1–21 (MLWQTFFSSLLLLSLLFGCNG) is a signal peptide. 10 LRR repeats span residues 141–166 (ASNL…IGNL), 167–190 (TKLK…ICNL), 191–213 (KRLK…CFKG), 214–237 (LKEL…SFGD), 238–263 (LVSL…GFLK), 265–286 (LTLL…IENI), 287–311 (QSLT…NWGK), 312–336 (MSNL…LTNL), 337–360 (KRLR…KLEA), and 362–387 (PCLG…FYEK).

Its subcellular location is the cell membrane. In terms of biological role, required for growth promotion and enhanced seed production mediated by the endophytic fungus Piriformospora indica. In Arabidopsis thaliana (Mouse-ear cress), this protein is Piriformospora indica-insensitive protein 2 (PII-2).